The following is a 1138-amino-acid chain: Phosphatidylserine decarboxylase proenzyme 2 (1138 aa).

The 122-residue stretch at 1 to 122 (MRIIKGRKRG…SNSGLSSHSH (122 aa)) folds into the C2 1 domain. Disordered regions lie at residues 90 to 166 (TGAP…PGST), 269 to 305 (MRSSSSLPPPLEDMLSNSSAVSGNEIRREKPYSDTDL), and 413 to 448 (AVSENDITSVDDEESENQQESDEEFDIYNEDEREDS). Low complexity predominate over residues 98-121 (SRPRTTTANTSSSTLSNSGLSSHS). Residues 125-135 (RNLNVTSKGNQ) are compositionally biased toward polar residues. Low complexity predominate over residues 136 to 166 (TSTSINSVSSSATPAPSHSSSSLSTTGPGST). Residues 293–305 (EIRREKPYSDTDL) show a composition bias toward basic and acidic residues. Residues 421–448 (SVDDEESENQQESDEEFDIYNEDEREDS) show a composition bias toward acidic residues. Residues 478–600 (RRAKSNFFIS…QQQQHENEWI (123 aa)) enclose the C2 2 domain. Ca(2+) is bound by residues D571, S574, and D577. Catalysis depends on charge relay system; for autoendoproteolytic cleavage activity residues D899, H956, and S1043. S1043 serves as the catalytic Schiff-base intermediate with substrate; via pyruvic acid; for decarboxylase activity. A Pyruvic acid (Ser); by autocatalysis modification is found at S1043.

Belongs to the phosphatidylserine decarboxylase family. PSD-B subfamily. Eukaryotic type II sub-subfamily. In terms of assembly, heterodimer of a large membrane-associated beta subunit and a small pyruvoyl-containing alpha subunit. Interacts with pstB2/PDR17. This interaction may be a means to structurally tether the donor membrane (ER) harboring PstB2/PDR17 to acceptor membranes (Golgi/endosomes) harboring PSD2 during PtdSer transport to the site of PtdEtn synthesis. Pyruvate serves as cofactor. Ca(2+) is required as a cofactor. In terms of processing, is synthesized initially as an inactive proenzyme. Formation of the active enzyme involves a self-maturation process in which the active site pyruvoyl group is generated from an internal serine residue via an autocatalytic post-translational modification. Two non-identical subunits are generated from the proenzyme in this reaction, and the pyruvate is formed at the N-terminus of the alpha chain, which is derived from the carboxyl end of the proenzyme. The autoendoproteolytic cleavage occurs by a canonical serine protease mechanism, in which the side chain hydroxyl group of the serine supplies its oxygen atom to form the C-terminus of the beta chain, while the remainder of the serine residue undergoes an oxidative deamination to produce ammonia and the pyruvoyl prosthetic group on the alpha chain. During this reaction, the Ser that is part of the protease active site of the proenzyme becomes the pyruvoyl prosthetic group, which constitutes an essential element of the active site of the mature decarboxylase.

The protein localises to the golgi apparatus membrane. It is found in the endosome membrane. The enzyme catalyses a 1,2-diacyl-sn-glycero-3-phospho-L-serine + H(+) = a 1,2-diacyl-sn-glycero-3-phosphoethanolamine + CO2. It functions in the pathway phospholipid metabolism; phosphatidylethanolamine biosynthesis; phosphatidylethanolamine from CDP-diacylglycerol: step 2/2. Its function is as follows. Catalyzes the formation of phosphatidylethanolamine (PtdEtn) from phosphatidylserine (PtdSer). Plays a central role in phospholipid metabolism and in the interorganelle trafficking of phosphatidylserine. Phosphatidylethanolamine produced by PSD2 is insufficient to completely provide the PtdEtn pool required by mitochondria under respiratory conditions. PSD2 is also involved in the PtdSer transport step to the site of PtdEtn synthesis on the Golgi/endosome membranes. Required for normal heavy metal resistance. The protein is Phosphatidylserine decarboxylase proenzyme 2 of Saccharomyces cerevisiae (strain ATCC 204508 / S288c) (Baker's yeast).